The primary structure comprises 176 residues: Cytochrome b (176 aa).

3 helical membrane-spanning segments follow: residues 33-53, 77-98, and 113-133; these read FGSLLGICLMLQIMTGLFLAM, WMLRYLHANGASMFFICLYLHV, and WNVGVLLLFTVMATAFMGYVL. Residues His83 and His97 each contribute to the heme b site.

The protein belongs to the cytochrome b family. As to quaternary structure, the cytochrome bc1 complex contains 11 subunits: 3 respiratory subunits (MT-CYB, CYC1 and UQCRFS1), 2 core proteins (UQCRC1 and UQCRC2) and 6 low-molecular weight proteins (UQCRH/QCR6, UQCRB/QCR7, UQCRQ/QCR8, UQCR10/QCR9, UQCR11/QCR10 and a cleavage product of UQCRFS1). This cytochrome bc1 complex then forms a dimer. Requires heme b as cofactor.

The protein resides in the mitochondrion inner membrane. In terms of biological role, component of the ubiquinol-cytochrome c reductase complex (complex III or cytochrome b-c1 complex) that is part of the mitochondrial respiratory chain. The b-c1 complex mediates electron transfer from ubiquinol to cytochrome c. Contributes to the generation of a proton gradient across the mitochondrial membrane that is then used for ATP synthesis. This chain is Cytochrome b (MT-CYB), found in Idionycteris phyllotis (Allen's big-eared bat).